Here is a 191-residue protein sequence, read N- to C-terminus: Protein Ves (191 aa).

It belongs to the Ves family.

The sequence is that of Protein Ves from Shigella boydii serotype 18 (strain CDC 3083-94 / BS512).